The following is a 229-amino-acid chain: uncharacterized protein (229 aa).

This is an uncharacterized protein from Borreliella burgdorferi (strain ATCC 35210 / DSM 4680 / CIP 102532 / B31) (Borrelia burgdorferi).